A 956-amino-acid chain; its full sequence is MAM domain-containing glycosylphosphatidylinositol anchor protein 1 (956 aa).

Positions 1–18 (MEVTCLLLLALIPFHCRG) are cleaved as a signal peptide. Ig-like domains lie at 24–123 (PAQA…KSIR) and 132–230 (PVLT…KAIT). The N-linked (GlcNAc...) asparagine glycan is linked to N42. 2 disulfides stabilise this stretch: C60-C108 and C157-C214. N-linked (GlcNAc...) asparagine glycosylation is found at N235, N247, N257, and N307. 4 consecutive Ig-like domains span residues 240-323 (PALK…KTVN), 338-432 (PDMI…IEVN), 440-532 (PTIS…AQVQ), and 539-650 (PEVE…PTRS). Intrachain disulfides connect C262-C308 and C357-C415. The N-linked (GlcNAc...) asparagine glycan is linked to N432. Disulfide bonds link C463–C514 and C560–C616. Positions 627 to 744 (CLFQVSAKAY…SRIIHYTEPI (118 aa)) constitute a Fibronectin type-III domain. Positions 752-919 (NTCHFEDEKI…VTLKKGECPR (168 aa)) constitute an MAM domain. Over residues 780–789 (LTQNPKRSPN) the composition is skewed to polar residues. The interval 780–799 (LTQNPKRSPNTGPPTDISGT) is disordered. S933 is lipidated: GPI-anchor amidated serine. Residues 934-956 (GAPRLSSLQLWGSMAIFLLALQR) constitute a propeptide, removed in mature form.

In terms of assembly, interacts heterophilically through its MAM domain with proteins in axon-rich regions and through its Ig-like domains with proteins in differentiating muscle. Interacts (through the Ig-like domains) with NLGN2. As to expression, expressed by neurons in layers 2 and 3 of the cortex during their migration and settling in the cortical plate. Also found in layers 4 and 6a. From 9.5 dpc-13.5 dpc, detected in the marginal zone of the developing cortex. At 16.5 dpc, modest expression is found in the intermediate zone. At postnatal day 1, evident in the superficial cortical plate. By postnatal day 7, expression is limited to layers 2 and 3 throughout most of the cortex.

The protein localises to the cell membrane. Its function is as follows. Required for radial migration of cortical neurons in the superficial layer of the neocortex. Plays a role in the formation or maintenance of inhibitory synapses. May function by inhibiting the activity of NLGN2. This is MAM domain-containing glycosylphosphatidylinositol anchor protein 1 from Mus musculus (Mouse).